We begin with the raw amino-acid sequence, 426 residues long: MAIIEAVGAREILDSRGNPTIEVEVALDDGTTARAGVPSGASTGAFEAVERRDGDKTRYGGKGVEDAVHTVIDTIAPEVLGFDASEQRLLDTTLIDLDGSSNKGKLGANAILGVSLAVARAAADSADLPLFRYVGGPNAHLLPVPMMNILNGGSHADSNVDVQEFMVAPIGAPSFREALRRGAEVYHALKSVLKERGLATGLGDEGGFAPNLPSNRDALDLILVAVEKAGYSAGTDVALALDVASTEFFSDGAYQFEGRPHTPEEMVAYYTQLIADYPMVSIEDPLSEDEWDSWAHLVSETGDRVQIVGDDLFVTNPERLAKGIELKAANSLLVKVNQIGTLTETLDAVTLAQRSGFTAMVSHRSGETEDTTIADLSVAVNAGQIKTGAPARGERINKYNQLLRIEDELGDAAVYAGRTAFPRLQG.

Glutamine 163 is a binding site for (2R)-2-phosphoglycerate. The active-site Proton donor is the glutamate 205. Mg(2+)-binding residues include aspartate 242, glutamate 283, and aspartate 310. 4 residues coordinate (2R)-2-phosphoglycerate: lysine 335, arginine 364, serine 365, and lysine 386. Lysine 335 functions as the Proton acceptor in the catalytic mechanism.

The protein belongs to the enolase family. Mg(2+) is required as a cofactor.

It is found in the cytoplasm. The protein localises to the secreted. Its subcellular location is the cell surface. It carries out the reaction (2R)-2-phosphoglycerate = phosphoenolpyruvate + H2O. It functions in the pathway carbohydrate degradation; glycolysis; pyruvate from D-glyceraldehyde 3-phosphate: step 4/5. Catalyzes the reversible conversion of 2-phosphoglycerate (2-PG) into phosphoenolpyruvate (PEP). It is essential for the degradation of carbohydrates via glycolysis. The chain is Enolase from Beutenbergia cavernae (strain ATCC BAA-8 / DSM 12333 / CCUG 43141 / JCM 11478 / NBRC 16432 / NCIMB 13614 / HKI 0122).